Reading from the N-terminus, the 277-residue chain is Ribosomal RNA small subunit methyltransferase I (277 aa).

It belongs to the methyltransferase superfamily. RsmI family.

The protein localises to the cytoplasm. The enzyme catalyses cytidine(1402) in 16S rRNA + S-adenosyl-L-methionine = 2'-O-methylcytidine(1402) in 16S rRNA + S-adenosyl-L-homocysteine + H(+). In terms of biological role, catalyzes the 2'-O-methylation of the ribose of cytidine 1402 (C1402) in 16S rRNA. The chain is Ribosomal RNA small subunit methyltransferase I from Mycoplasma genitalium (strain ATCC 33530 / DSM 19775 / NCTC 10195 / G37) (Mycoplasmoides genitalium).